The following is a 210-amino-acid chain: Proline-rich protein 20G (210 aa).

Basic residues predominate over residues 1–11; sequence MEEPRHSKRPR. Residues 1–82 are disordered; sequence MEEPRHSKRP…GGSWRAGRGR (82 aa). The segment covering 69-82 has biased composition (gly residues); it reads GQRGGGSWRAGRGR.

It belongs to the PRR20 family.

This chain is Proline-rich protein 20G, found in Homo sapiens (Human).